The sequence spans 210 residues: Large ribosomal subunit protein uL4 (210 aa).

A compositionally biased stretch (polar residues) spans glutamine 41–lysine 52. The segment at glutamine 41–glycine 71 is disordered. A compositionally biased stretch (basic residues) spans glycine 60 to glycine 71.

Belongs to the universal ribosomal protein uL4 family. Part of the 50S ribosomal subunit.

Functionally, one of the primary rRNA binding proteins, this protein initially binds near the 5'-end of the 23S rRNA. It is important during the early stages of 50S assembly. It makes multiple contacts with different domains of the 23S rRNA in the assembled 50S subunit and ribosome. Forms part of the polypeptide exit tunnel. This chain is Large ribosomal subunit protein uL4, found in Trichormus variabilis (strain ATCC 29413 / PCC 7937) (Anabaena variabilis).